Consider the following 360-residue polypeptide: MSQSAVSFQISPVSKAQDPLIQQKIDLKTKPPGALGQLESLALQIARVQATDSQQADQPQNTVLKIVHPTMLVFAGDHGIVAEGVSIAPSEVTRQMVQNFAHGGAAINVFCRQVGFKLEVIDCGILTPVEGVEGIIDQRLGAGTGAIHLEPAMALETVDKGFAMARDLIERHHQAGCNLVAFGEMGIGNTSAAAAIMAAIMQLDVIDCVGRGTGINSETLERKLMLIELALLLHQSALTGPKSVLACLGGFEIVQMTGAMLAAAERKMLVVVDGFIATAAALVAVQIAPNVRDYLIFAHQSDEQGHQRMLEFLQAKPLLSLGLRLGEGTGAALALPLIQASVNFYNQMASFSDAGIEAVV.

The active-site Proton acceptor is Glu-327.

The protein belongs to the CobT family.

It catalyses the reaction 5,6-dimethylbenzimidazole + nicotinate beta-D-ribonucleotide = alpha-ribazole 5'-phosphate + nicotinate + H(+). The protein operates within nucleoside biosynthesis; alpha-ribazole biosynthesis; alpha-ribazole from 5,6-dimethylbenzimidazole: step 1/2. In terms of biological role, catalyzes the synthesis of alpha-ribazole-5'-phosphate from nicotinate mononucleotide (NAMN) and 5,6-dimethylbenzimidazole (DMB). The polypeptide is Nicotinate-nucleotide--dimethylbenzimidazole phosphoribosyltransferase (Shewanella baltica (strain OS185)).